A 158-amino-acid chain; its full sequence is 6,7-dimethyl-8-ribityllumazine synthase (158 aa).

Residues F22, 57–59 (AVE), and 81–83 (AVI) contribute to the 5-amino-6-(D-ribitylamino)uracil site. 86-87 (GT) contributes to the (2S)-2-hydroxy-3-oxobutyl phosphate binding site. The active-site Proton donor is the H89. Position 114 (F114) interacts with 5-amino-6-(D-ribitylamino)uracil. Position 128 (R128) interacts with (2S)-2-hydroxy-3-oxobutyl phosphate.

It belongs to the DMRL synthase family. In terms of assembly, forms an icosahedral capsid composed of 60 subunits, arranged as a dodecamer of pentamers.

The catalysed reaction is (2S)-2-hydroxy-3-oxobutyl phosphate + 5-amino-6-(D-ribitylamino)uracil = 6,7-dimethyl-8-(1-D-ribityl)lumazine + phosphate + 2 H2O + H(+). It functions in the pathway cofactor biosynthesis; riboflavin biosynthesis; riboflavin from 2-hydroxy-3-oxobutyl phosphate and 5-amino-6-(D-ribitylamino)uracil: step 1/2. Catalyzes the formation of 6,7-dimethyl-8-ribityllumazine by condensation of 5-amino-6-(D-ribitylamino)uracil with 3,4-dihydroxy-2-butanone 4-phosphate. This is the penultimate step in the biosynthesis of riboflavin. This is 6,7-dimethyl-8-ribityllumazine synthase from Shewanella halifaxensis (strain HAW-EB4).